Reading from the N-terminus, the 149-residue chain is L-alanine exporter AlaE (149 aa).

Helical transmembrane passes span 17–37 (FAMVIFCFITGMFIEIFISGM), 43–63 (LASRMLSIPVNIAIAWPYGVF), 86–106 (LTAYVLFQSPVYAAILFTVGA), and 111–131 (IITAVSSNAAVSCVMGVFYGY).

This sequence belongs to the AlaE exporter family.

It localises to the cell inner membrane. Exports L-alanine. The polypeptide is L-alanine exporter AlaE (Aliivibrio salmonicida (strain LFI1238) (Vibrio salmonicida (strain LFI1238))).